The sequence spans 307 residues: Probable inactive peptidyl-prolyl cis-trans isomerase-like 6 (307 aa).

The 164-residue stretch at 141–304 (FLDISIDLYP…QNCVITASGQ (164 aa)) folds into the PPIase cyclophilin-type domain.

It belongs to the cyclophilin-type PPIase family.

In terms of biological role, probable inactive PPIase with no peptidyl-prolyl cis-trans isomerase activity. In Bos taurus (Bovine), this protein is Probable inactive peptidyl-prolyl cis-trans isomerase-like 6.